A 185-amino-acid polypeptide reads, in one-letter code: Ribosome-recycling factor (185 aa).

Belongs to the RRF family.

It is found in the cytoplasm. In terms of biological role, responsible for the release of ribosomes from messenger RNA at the termination of protein biosynthesis. May increase the efficiency of translation by recycling ribosomes from one round of translation to another. This chain is Ribosome-recycling factor, found in Yersinia pseudotuberculosis serotype O:1b (strain IP 31758).